Consider the following 353-residue polypeptide: Paraneoplastic antigen Ma1 homolog (353 aa).

The protein belongs to the PNMA family. As to expression, testis and brain specific.

Its subcellular location is the nucleus. The protein resides in the nucleolus. The sequence is that of Paraneoplastic antigen Ma1 homolog (Pnma1) from Rattus norvegicus (Rat).